The chain runs to 137 residues: MATNKSIKSVVICVLILGLVLEQVQVEGKSCCKNTTGRNCYNACRFAGGSRPVCATACGCKIISGPTCPRDYPKLNLLPESGEPNVTEYCTIGCRTSVCDNMDNVSRGQEMKFDMGLCSNACARFCNDGEVIQSVEA.

A signal peptide spans 1 to 28 (MATNKSIKSVVICVLILGLVLEQVQVEG). Intrachain disulfides connect Cys31-Cys68, Cys32-Cys60, Cys40-Cys58, and Cys44-Cys54. A propeptide spans 75–137 (LNLLPESGEP…DGEVIQSVEA (63 aa)) (acidic domain).

This sequence belongs to the plant thionin (TC 1.C.44) family. 4 C-C subfamily.

The protein localises to the secreted. Functionally, thionins are small plant proteins which are toxic to animal cells. They seem to exert their toxic effect at the level of the cell membrane. Their precise function is not known. In Hordeum vulgare (Barley), this protein is Thionin BTH7.